Reading from the N-terminus, the 476-residue chain is Chromosomal replication initiator protein DnaA (476 aa).

Residues 1-87 form a domain I, interacts with DnaA modulators region; that stretch reads MSDRSDPTHA…AGVSNFAIVV (87 aa). The interval 87–131 is domain II; that stretch reads VNPGIAQDAFAQHPEPAEQPYIETPTITAPTDNPGLPASPSRGDS. Residues 132 to 348 form a domain III, AAA+ region region; sequence RLNPKYGFDT…GTLIRVTAFA (217 aa). Residues Gly-176, Gly-178, Lys-179, and Thr-180 each coordinate ATP. Residues 349 to 476 are domain IV, binds dsDNA; that stretch reads SLNKTPVDLA…IKQNHRYGKM (128 aa).

The protein belongs to the DnaA family. Oligomerizes as a right-handed, spiral filament on DNA at oriC.

It is found in the cytoplasm. Functionally, plays an essential role in the initiation and regulation of chromosomal replication. ATP-DnaA binds to the origin of replication (oriC) to initiate formation of the DNA replication initiation complex once per cell cycle. Binds the DnaA box (a 9 base pair repeat at the origin) and separates the double-stranded (ds)DNA. Forms a right-handed helical filament on oriC DNA; dsDNA binds to the exterior of the filament while single-stranded (ss)DNA is stabiized in the filament's interior. The ATP-DnaA-oriC complex binds and stabilizes one strand of the AT-rich DNA unwinding element (DUE), permitting loading of DNA polymerase. After initiation quickly degrades to an ADP-DnaA complex that is not apt for DNA replication. Binds acidic phospholipids. This is Chromosomal replication initiator protein DnaA from Clavibacter sepedonicus (Clavibacter michiganensis subsp. sepedonicus).